Consider the following 347-residue polypeptide: Ribosomal RNA large subunit methyltransferase M (347 aa).

Residues Ser-184, 217–220, Asp-236, Asp-256, and Asp-272 each bind S-adenosyl-L-methionine; that span reads APGG. Catalysis depends on Lys-301, which acts as the Proton acceptor.

It belongs to the class I-like SAM-binding methyltransferase superfamily. RNA methyltransferase RlmE family. RlmM subfamily. In terms of assembly, monomer.

The protein resides in the cytoplasm. It carries out the reaction cytidine(2498) in 23S rRNA + S-adenosyl-L-methionine = 2'-O-methylcytidine(2498) in 23S rRNA + S-adenosyl-L-homocysteine + H(+). In terms of biological role, catalyzes the 2'-O-methylation at nucleotide C2498 in 23S rRNA. This Xanthomonas oryzae pv. oryzae (strain MAFF 311018) protein is Ribosomal RNA large subunit methyltransferase M.